We begin with the raw amino-acid sequence, 192 residues long: Protein GrpE (192 aa).

This sequence belongs to the GrpE family. In terms of assembly, homodimer.

Its subcellular location is the cytoplasm. Functionally, participates actively in the response to hyperosmotic and heat shock by preventing the aggregation of stress-denatured proteins, in association with DnaK and GrpE. It is the nucleotide exchange factor for DnaK and may function as a thermosensor. Unfolded proteins bind initially to DnaJ; upon interaction with the DnaJ-bound protein, DnaK hydrolyzes its bound ATP, resulting in the formation of a stable complex. GrpE releases ADP from DnaK; ATP binding to DnaK triggers the release of the substrate protein, thus completing the reaction cycle. Several rounds of ATP-dependent interactions between DnaJ, DnaK and GrpE are required for fully efficient folding. The sequence is that of Protein GrpE from Neisseria gonorrhoeae (strain ATCC 700825 / FA 1090).